Reading from the N-terminus, the 403-residue chain is Lipase lipl-5 (403 aa).

Positions 1-18 are cleaved as a signal peptide; the sequence is MWRFAVFLAAFFVQDVVG. N64 is a glycosylation site (N-linked (GlcNAc...) asparagine). S167 serves as the catalytic Nucleophile. N271 is a glycosylation site (N-linked (GlcNAc...) asparagine). Residues D343 and H375 each act as charge relay system in the active site.

The protein belongs to the AB hydrolase superfamily. Lipase family.

It is found in the lysosome lumen. Its subcellular location is the secreted. Lipase involved in lipid homeostasis. Regulates mitochondrial lipid composition, in particular cardiolipins and coenzyme Q-9 levels, in response to nutrient availability. Does not affect global triglyceride levels in response to nutrient availability. However, in coelomocytes, specifically promotes triglyceride catabolism and lifespan extension in response to nutrient deprivation. This chain is Lipase lipl-5, found in Caenorhabditis elegans.